A 93-amino-acid chain; its full sequence is UPF0147 protein MJ1419 (93 aa).

The protein belongs to the UPF0147 family.

The polypeptide is UPF0147 protein MJ1419 (Methanocaldococcus jannaschii (strain ATCC 43067 / DSM 2661 / JAL-1 / JCM 10045 / NBRC 100440) (Methanococcus jannaschii)).